A 212-amino-acid polypeptide reads, in one-letter code: Large ribosomal subunit protein uL3 (212 aa).

Residues 119 to 146 (YQGNIKRWGQSRGPETHGSRYHRIPGSM) are disordered.

It belongs to the universal ribosomal protein uL3 family. In terms of assembly, part of the 50S ribosomal subunit. Forms a cluster with proteins L14 and L19.

In terms of biological role, one of the primary rRNA binding proteins, it binds directly near the 3'-end of the 23S rRNA, where it nucleates assembly of the 50S subunit. This Lactobacillus helveticus (strain DPC 4571) protein is Large ribosomal subunit protein uL3.